We begin with the raw amino-acid sequence, 219 residues long: UPF0502 protein Swoo_2055 (219 aa).

Positions 167 to 195 (QVKGESVPISEHSRSQREAPSKRQDEMDE) are disordered. Residues 177 to 191 (EHSRSQREAPSKRQD) are compositionally biased toward basic and acidic residues.

Belongs to the UPF0502 family.

This chain is UPF0502 protein Swoo_2055, found in Shewanella woodyi (strain ATCC 51908 / MS32).